The sequence spans 306 residues: Agmatinase (306 aa).

Mn(2+) contacts are provided by H126, D149, H151, D153, D230, and D232.

Belongs to the arginase family. Agmatinase subfamily. Requires Mn(2+) as cofactor.

It carries out the reaction agmatine + H2O = urea + putrescine. Its pathway is amine and polyamine biosynthesis; putrescine biosynthesis via agmatine pathway; putrescine from agmatine: step 1/1. Its function is as follows. Catalyzes the formation of putrescine from agmatine. In Shigella sonnei (strain Ss046), this protein is Agmatinase.